A 497-amino-acid polypeptide reads, in one-letter code: MFFPVVFFIPFVLGAPTQKALEKILVDNNPDSVTNREKIRGIIDKAFENRVPRVQGRQGVAPPVTFAALNYGPKNNQTKKFEELNQDINEYTFESDIMLNEKQAKHIATAIENGNYRSKRQAIVDTTNFWSVSVPIFYQFDTKLSATNIANVRKAIQFWNDNSCLSFKEDNNAKNRLFLSSAGGCWSYVGKQVDMPYQMVSVGPNCDTFGTATHELMHAIGFWHQQSRADRDNYVYVDFSNIIPSQAYNFQKMAVDQAQLLNLPYDYGSVMQYYPYAFAVDSSKYTILAKENGFQNSMGQREAPAFSDIIGVNKLYNCTSQCKIQMKCSNCGITDSRNCNQCKCPRYFTGASCDSLPSGTAPNCNGAVLQATSSWETFDAKAGDPSSFSSSTDNSTNCYWHIKAPEGQQIEFKMTKTPLAAICMQECPWQSIEVNLGKFDLFGMITCCDTILNQVFTSELNMIALRGIIRYNQLTFSIQYRAVPSSKPASTNACLNQ.

The first 14 residues, 1–14 (MFFPVVFFIPFVLG), serve as a signal peptide directing secretion. A propeptide spanning residues 15-120 (APTQKALEKI…IENGNYRSKR (106 aa)) is cleaved from the precursor. N-linked (GlcNAc...) asparagine glycosylation is present at N76. The Peptidase M12A domain occupies 121–319 (QAIVDTTNFW…IGVNKLYNCT (199 aa)). 7 disulfides stabilise this stretch: C164–C318, C185–C206, C328–C339, C331–C342, C344–C353, C364–C398, and C427–C447. Residue H214 coordinates Zn(2+). E215 is an active-site residue. Residues H218 and H224 each coordinate Zn(2+). A glycan (N-linked (GlcNAc...) asparagine) is linked at N317. An EGF-like domain is found at 324–354 (IQMKCSNCGITDSRNCNQCKCPRYFTGASCD). The region spanning 364–483 (CNGAVLQATS…LTFSIQYRAV (120 aa)) is the CUB domain. N-linked (GlcNAc...) asparagine glycosylation is present at N394.

Requires Zn(2+) as cofactor.

Its subcellular location is the secreted. Its function is as follows. Metalloprotease. This chain is Zinc metalloproteinase nas-28 (nas-28), found in Caenorhabditis elegans.